Consider the following 489-residue polypeptide: Neuropeptide CCHamide-2 receptor (489 aa).

The Extracellular segment spans residues 1-74 (MYASLMDVGQ…DRPETYIVTV (74 aa)). Residues asparagine 25 and asparagine 50 are each glycosylated (N-linked (GlcNAc...) asparagine). Residues 75–95 (LYTLIFIVGVLGNGTLVIIFF) traverse the membrane as a helical segment. The Cytoplasmic portion of the chain corresponds to 96-107 (RHRSMRNIPNTY). The chain crosses the membrane as a helical span at residues 108 to 128 (ILSLALADLLVILVCVPVATI). Residues 129–143 (VYTQESWPFERNMCR) are Extracellular-facing. Cysteines 142 and 225 form a disulfide. Residues 144 to 164 (ISEFFKDISIGVSVFTLTALS) form a helical membrane-spanning segment. At 165–184 (GERYCAIVNPLRKLQTKPLT) the chain is on the cytoplasmic side. Residues 185 to 205 (VFTAVMIWILAILLGMPSVLF) traverse the membrane as a helical segment. Over 206–235 (SDIKSYPVFTATGNMTIEVCSPFRDPEYAK) the chain is Extracellular. Asparagine 219 carries an N-linked (GlcNAc...) asparagine glycan. A helical membrane pass occupies residues 236–256 (FMVAGKALVYYLLPLSIIGAL). Residues 257–293 (YIMMAKRLHMSARNMPGEQQSMQSRTQARARLHVARM) lie on the Cytoplasmic side of the membrane. Residues 294–314 (VVAFVVVFFICFFPYHVFELW) traverse the membrane as a helical segment. Topologically, residues 315 to 333 (YHFYPTAEEDFDEFWNVLR) are extracellular. The helical transmembrane segment at 334–354 (IVGFCTSFLNSCVNPVALYCV) threads the bilayer. Residues 355–489 (SGVFRQHFNR…NRYESGVMRY (135 aa)) are Cytoplasmic-facing. The interval 438 to 468 (SFHRQDSMPLQHGNAHGGGAGGGSSGLGAGG) is disordered. Positions 452-468 (AHGGGAGGGSSGLGAGG) are enriched in gly residues.

Belongs to the G-protein coupled receptor 1 family. In terms of tissue distribution, highly expressed in larval brain. Also highly expressed in adult brain with very low levels in larval and adult gut.

Its subcellular location is the cell membrane. Receptor for the neuropeptide CCHamide-2. This is Neuropeptide CCHamide-2 receptor from Drosophila melanogaster (Fruit fly).